Consider the following 184-residue polypeptide: ATP-dependent protease subunit HslV (184 aa).

The active site involves threonine 8. Positions 165, 168, and 171 each coordinate Na(+).

The protein belongs to the peptidase T1B family. HslV subfamily. In terms of assembly, a double ring-shaped homohexamer of HslV is capped on each side by a ring-shaped HslU homohexamer. The assembly of the HslU/HslV complex is dependent on binding of ATP.

The protein resides in the cytoplasm. It carries out the reaction ATP-dependent cleavage of peptide bonds with broad specificity.. Its activity is regulated as follows. Allosterically activated by HslU binding. Functionally, protease subunit of a proteasome-like degradation complex believed to be a general protein degrading machinery. The chain is ATP-dependent protease subunit HslV from Pediococcus pentosaceus (strain ATCC 25745 / CCUG 21536 / LMG 10740 / 183-1w).